Reading from the N-terminus, the 204-residue chain is Terpene cyclase trt1 (204 aa).

Helical transmembrane passes span 44 to 64 (FMSI…YPIA), 67 to 87 (HWAG…FIVA), 103 to 122 (FARL…HLAL), 132 to 154 (FFWS…LVCR), and 169 to 189 (WFYI…FFYF).

This sequence belongs to the paxB family.

The protein resides in the membrane. It participates in secondary metabolite biosynthesis; terpenoid biosynthesis. Its function is as follows. Terpene cyclase; part of the gene cluster that mediates the biosynthesis of terretonin, a fungal meroterpenoid that acts as a mycotoxin. The first step of the pathway is the synthesis of 3,5-dimethylorsellinic acid (DMOA) by the polyketide synthase trt4. DMOA is then prenylated into farnesyl-DMOA by the polyprenyl transferase trt2. Methylation by the methyltransferase trt5 then leads to farnesyl-DMOA methyl ester which is further subject to epoxidation by the FAD-dependent monooxygenase trt8 to yield epoxyfarnesyl-DMOA methyl ester. Cyclization of epoxyfarnesyl-DMOA methyl ester by the terpene cyclase trt1 leads to a tetracycle intermediate which is in turn converted to preterretonin. Dehydrogenase trt9 comes next to transform preterretonin to preterrenoid. The FAD-dependent monooxygenase trt3 is then required for the C-hydroxylation at C16 of preterrenoid to yield terrenoid. The cytochrome P450 trt6 catalyzes three successive oxidations to transform terrenoid into an unstable intermediate, which then undergoes the D-ring expansion and unusual rearrangement of the methoxy group to afford the core skeleton of terretonin. Trt14 catalyzes the D-ring expansion of terretonin involving intramolecular methoxy rearrangement as well as the hydrolysis of the expanded D-ring and the methyl ester moiety. Finally, the nonheme iron-dependent dioxygenase trt7 accomplishes the last two oxidation reactions steps to complete the biosynthesis of terretonin. Terretonin C is produced via spontaneous decarboxylation of the terretonin precursor. Another shunt product of the terretonin biosynthesis is dihydrofarnesyl-DMOA, derived from epoxyfarnesyl-DMOA through hydrolysis of the epoxide. This Aspergillus terreus (strain NIH 2624 / FGSC A1156) protein is Terpene cyclase trt1.